The sequence spans 371 residues: Glycosyltransferase 8 domain-containing protein 1 (371 aa).

Residues 1 to 5 lie on the Cytoplasmic side of the membrane; that stretch reads MSFRK. The helical; Signal-anchor for type II membrane protein transmembrane segment at 6–26 threads the bilayer; it reads VTIIIWALAVILFLLALHHNF. The Lumenal portion of the chain corresponds to 27-371; the sequence is LSLSSLLRND…RRHMDTSNIK (345 aa). N-linked (GlcNAc...) asparagine glycosylation is present at asparagine 257.

It belongs to the glycosyltransferase 8 family.

The protein resides in the membrane. This is Glycosyltransferase 8 domain-containing protein 1 (Glt8d1) from Rattus norvegicus (Rat).